A 157-amino-acid chain; its full sequence is NADPH-dependent 7-cyano-7-deazaguanine reductase (157 aa).

Cys-55 (thioimide intermediate) is an active-site residue. Residue Asp-62 is the Proton donor of the active site. Residues 77 to 79 (VES) and 96 to 97 (HE) contribute to the substrate site.

It belongs to the GTP cyclohydrolase I family. QueF type 1 subfamily.

Its subcellular location is the cytoplasm. It catalyses the reaction 7-aminomethyl-7-carbaguanine + 2 NADP(+) = 7-cyano-7-deazaguanine + 2 NADPH + 3 H(+). It participates in tRNA modification; tRNA-queuosine biosynthesis. In terms of biological role, catalyzes the NADPH-dependent reduction of 7-cyano-7-deazaguanine (preQ0) to 7-aminomethyl-7-deazaguanine (preQ1). The chain is NADPH-dependent 7-cyano-7-deazaguanine reductase from Neisseria gonorrhoeae (strain ATCC 700825 / FA 1090).